Reading from the N-terminus, the 232-residue chain is MLKLTDITWLYQHLPMRFSLTVERGEQVAILGPSGAGKSTLLNLIAGFLTPASGLLTIDDVDHTTTPPSRRPVSMLFQENNLFSHLTVAQNIGLGLNPGLKLNAAQQKKMHAIAHQMGIDNLMARLPGELSGGQRQRVALARCLVREQPILLLDEPFSALDPALRQEMLTLVSTSCQQQKMTLLMVSHSVEDAARIATRSVVVADGRIAWQGKTDELLSGKASASALLGIKG.

The ABC transporter domain occupies Leu2–Ile230. Residue Gly32–Ser39 participates in ATP binding.

This sequence belongs to the ABC transporter superfamily. Thiamine importer (TC 3.A.1.19.1) family. As to quaternary structure, the complex is composed of two ATP-binding proteins (ThiQ), two transmembrane proteins (ThiP) and a solute-binding protein (ThiB).

It localises to the cell inner membrane. The catalysed reaction is thiamine(out) + ATP + H2O = thiamine(in) + ADP + phosphate + H(+). Its function is as follows. Part of the ABC transporter complex ThiBPQ involved in thiamine import. Responsible for energy coupling to the transport system. The chain is Thiamine import ATP-binding protein ThiQ from Escherichia coli O6:H1 (strain CFT073 / ATCC 700928 / UPEC).